The following is a 96-amino-acid chain: Protein S100-A10 (96 aa).

2 positions are modified to N6-acetyllysine: lysine 23 and lysine 28. Position 37 is an N6-acetyllysine; alternate (lysine 37). A Glycyl lysine isopeptide (Lys-Gly) (interchain with G-Cter in SUMO2); alternate cross-link involves residue lysine 37. 2 positions are modified to N6-acetyllysine: lysine 54 and lysine 57. Residues aspartate 60–serine 71 are ancestral calcium site.

This sequence belongs to the S-100 family. In terms of assembly, heterotetramer containing 2 light chains of S100A10/p11 and 2 heavy chains of ANXA2/p36. Interacts with SCN10A. Interacts with TASOR.

Functionally, because S100A10 induces the dimerization of ANXA2/p36, it may function as a regulator of protein phosphorylation in that the ANXA2 monomer is the preferred target (in vitro) of tyrosine-specific kinase. This is Protein S100-A10 (S100A10) from Sus scrofa (Pig).